The following is a 373-amino-acid chain: Flagellar P-ring protein (373 aa).

A signal peptide spans 1 to 30 (MTNRWSFDVNKNLVTVLFTWLCLSISTAHA).

It belongs to the FlgI family. In terms of assembly, the basal body constitutes a major portion of the flagellar organelle and consists of four rings (L,P,S, and M) mounted on a central rod.

Its subcellular location is the periplasm. It localises to the bacterial flagellum basal body. Assembles around the rod to form the L-ring and probably protects the motor/basal body from shearing forces during rotation. The polypeptide is Flagellar P-ring protein (Aliivibrio fischeri (strain ATCC 700601 / ES114) (Vibrio fischeri)).